Reading from the N-terminus, the 295-residue chain is Phosphate transport system permease protein PstA (295 aa).

Transmembrane regions (helical) follow at residues 29-49 (IALVLSMATMLFGLFWLIWIL), 88-108 (LLILWATVIGTPLGIMAGIYL), 126-146 (DILLSAPSIVVGLFVYTIVVA), 149-169 (EHFSGWAGVIALALLQVPIVI), 198-218 (ISAITLKASVSGILTGILLAI), and 266-286 (NLAWAGVLLITLCVLLLNILA). Residues 83–286 (IAGSGLLILW…LCVLLLNILA (204 aa)) form the ABC transmembrane type-1 domain.

It belongs to the binding-protein-dependent transport system permease family. CysTW subfamily.

The protein localises to the cell inner membrane. Its function is as follows. Part of a binding-protein-dependent transport system for phosphate; probably responsible for the translocation of the substrate across the membrane. The chain is Phosphate transport system permease protein PstA (pstA) from Yersinia pestis.